The following is a 106-amino-acid chain: MKYLAAYLLLNAAGNTPDATKIKAILESVGIEIEDEKVSSVLSALEGKSVDELITEGNEKLAAVPAAGPASAGGAAAASGDAAAEEEKEEEAAEESDDDMGFGLFD.

Residue lysine 2 forms a Glycyl lysine isopeptide (Lys-Gly) (interchain with G-Cter in ubiquitin) linkage. Residue threonine 16 is modified to Phosphothreonine. Serine 40 and serine 43 each carry phosphoserine. Lysine 48 participates in a covalent cross-link: Glycyl lysine isopeptide (Lys-Gly) (interchain with G-Cter in ubiquitin). Serine 49 is subject to Phosphoserine. Residues 65-82 (PAAGPASAGGAAAASGDA) are compositionally biased toward low complexity. Residues 65-106 (PAAGPASAGGAAAASGDAAAEEEKEEEAAEESDDDMGFGLFD) form a disordered region. The segment covering 83–100 (AAEEEKEEEAAEESDDDM) has biased composition (acidic residues). The residue at position 96 (serine 96) is a Phosphoserine.

It belongs to the eukaryotic ribosomal protein P1/P2 family. In terms of assembly, component of the large ribosomal subunit (LSU). Mature yeast ribosomes consist of a small (40S) and a large (60S) subunit. The 40S small subunit contains 1 molecule of ribosomal RNA (18S rRNA) and 33 different proteins (encoded by 57 genes). The large 60S subunit contains 3 rRNA molecules (25S, 5.8S and 5S rRNA) and 46 different proteins (encoded by 81 genes). The 5 acidic ribosomal P-proteins form the stalk structure of the 60S subunit. They are organized as a pentameric complex in which uL10/P0 interacts with 2 heterodimers, P1A-P2B and P1B-P2A. In terms of processing, phosphorylation is not involved in the interaction of the acidic P proteins with the ribosome, however it is suggested to affect the ribosome activity and to participate in a possible ribosome regulatory mechanism. Post-translationally, the N-terminus is not modified.

The protein localises to the cytoplasm. Component of the ribosome, a large ribonucleoprotein complex responsible for the synthesis of proteins in the cell. The small ribosomal subunit (SSU) binds messenger RNAs (mRNAs) and translates the encoded message by selecting cognate aminoacyl-transfer RNA (tRNA) molecules. The large subunit (LSU) contains the ribosomal catalytic site termed the peptidyl transferase center (PTC), which catalyzes the formation of peptide bonds, thereby polymerizing the amino acids delivered by tRNAs into a polypeptide chain. The nascent polypeptides leave the ribosome through a tunnel in the LSU and interact with protein factors that function in enzymatic processing, targeting, and the membrane insertion of nascent chains at the exit of the ribosomal tunnel. This Saccharomyces cerevisiae (strain ATCC 204508 / S288c) (Baker's yeast) protein is Large ribosomal subunit protein P2A.